Consider the following 369-residue polypeptide: Isocitrate dehydrogenase [NAD] subunit 2, mitochondrial (369 aa).

Residues 1 to 15 (MLRNTFFRNTSRRFL) constitute a mitochondrion transit peptide. Threonine 105 is subject to Phosphothreonine. Arginine 119, arginine 129, and arginine 150 together coordinate substrate. Threonine 153 carries the post-translational modification Phosphothreonine. Aspartate 237 is a binding site for substrate. Residues aspartate 237, aspartate 263, and aspartate 267 each coordinate Mg(2+). Residues threonine 327 and threonine 349 each carry the phosphothreonine modification.

Belongs to the isocitrate and isopropylmalate dehydrogenases family. In terms of assembly, octamer of two non-identical subunits IDH1 and IDH2. It depends on Mg(2+) as a cofactor. Mn(2+) is required as a cofactor.

The protein localises to the mitochondrion matrix. The catalysed reaction is D-threo-isocitrate + NAD(+) = 2-oxoglutarate + CO2 + NADH. Its activity is regulated as follows. Allosterically regulated by several compounds including AMP, NAD(+), and citrate. Its function is as follows. Performs an essential role in the oxidative function of the citric acid cycle. Also binds RNA; specifically to the 5'-untranslated leaders of mitochondrial mRNAs. The polypeptide is Isocitrate dehydrogenase [NAD] subunit 2, mitochondrial (IDH2) (Saccharomyces cerevisiae (strain ATCC 204508 / S288c) (Baker's yeast)).